The chain runs to 351 residues: tRNA (guanine(26)-N(2))-dimethyltransferase (351 aa).

Residues 4-350 (VLRREGAVQF…AGYGEVKRAL (347 aa)) enclose the Trm1 methyltransferase domain. The S-adenosyl-L-methionine site is built by Arg39, Arg65, Asp83, Asp109, and Ala110.

The protein belongs to the class I-like SAM-binding methyltransferase superfamily. Trm1 family.

It catalyses the reaction guanosine(26) in tRNA + 2 S-adenosyl-L-methionine = N(2)-dimethylguanosine(26) in tRNA + 2 S-adenosyl-L-homocysteine + 2 H(+). Dimethylates a single guanine residue at position 26 of a number of tRNAs using S-adenosyl-L-methionine as donor of the methyl groups. The protein is tRNA (guanine(26)-N(2))-dimethyltransferase of Pyrobaculum neutrophilum (strain DSM 2338 / JCM 9278 / NBRC 100436 / V24Sta) (Thermoproteus neutrophilus).